A 602-amino-acid chain; its full sequence is Glutaminase liver isoform, mitochondrial (602 aa).

Residues 1–14 (MRSMRALQNALSRA) constitute a mitochondrion transit peptide. Disordered stretches follow at residues 1-29 (MRSMRALQNALSRAGSHGRRGGWGHPSRG) and 45-66 (AQGRGTPHSHQPQHSDHDASHS). Serine 219 serves as a coordination point for substrate. Lysine 253 is subject to N6-succinyllysine. A substrate-binding site is contributed by asparagine 268. N6-acetyllysine is present on residues lysine 279 and lysine 284. The substrate site is built by glutamate 314 and asparagine 321. Lysine 329 carries the N6-acetyllysine modification. 3 residues coordinate substrate: tyrosine 347, tyrosine 399, and valine 417. ANK repeat units lie at residues 518–551 (DSRTALHVAAAEGHIEVVKFLIEACKVNPFVKDR) and 552–585 (WGNIPLDDAVQFNHLEVVKLLQDYHDSYLLSETQ).

Belongs to the glutaminase family. Homotetramer, dimer of dimers. Does not assemble into higher oligomers. Interacts with the PDZ domain of the syntrophin SNTA1. Interacts with the PDZ domain of TAX1BP3.

It is found in the mitochondrion. It catalyses the reaction L-glutamine + H2O = L-glutamate + NH4(+). With respect to regulation, enzyme activity is not stimulated by phosphate. Phosphate increases kcat, but decreases substrate affinity, resulting in unchanged enzyme activity. In terms of biological role, plays an important role in the regulation of glutamine catabolism. Promotes mitochondrial respiration and increases ATP generation in cells by catalyzing the synthesis of glutamate and alpha-ketoglutarate. Increases cellular anti-oxidant function via NADH and glutathione production. May play a role in preventing tumor proliferation. This is Glutaminase liver isoform, mitochondrial (Gls2) from Mus musculus (Mouse).